The sequence spans 555 residues: Formate--tetrahydrofolate ligase (555 aa).

ATP is bound at residue 64-71 (TKAGIGKT).

It belongs to the formate--tetrahydrofolate ligase family.

It catalyses the reaction (6S)-5,6,7,8-tetrahydrofolate + formate + ATP = (6R)-10-formyltetrahydrofolate + ADP + phosphate. Its pathway is one-carbon metabolism; tetrahydrofolate interconversion. The polypeptide is Formate--tetrahydrofolate ligase (Phocaeicola vulgatus (strain ATCC 8482 / DSM 1447 / JCM 5826 / CCUG 4940 / NBRC 14291 / NCTC 11154) (Bacteroides vulgatus)).